The sequence spans 361 residues: Chorismate synthase (361 aa).

2 residues coordinate NADP(+): Arg48 and Arg54. Residues 125–127 (RSS), 238–239 (NA), Gly278, 293–297 (KPTSS), and Arg319 each bind FMN.

It belongs to the chorismate synthase family. In terms of assembly, homotetramer. FMNH2 is required as a cofactor.

It carries out the reaction 5-O-(1-carboxyvinyl)-3-phosphoshikimate = chorismate + phosphate. Its pathway is metabolic intermediate biosynthesis; chorismate biosynthesis; chorismate from D-erythrose 4-phosphate and phosphoenolpyruvate: step 7/7. Catalyzes the anti-1,4-elimination of the C-3 phosphate and the C-6 proR hydrogen from 5-enolpyruvylshikimate-3-phosphate (EPSP) to yield chorismate, which is the branch point compound that serves as the starting substrate for the three terminal pathways of aromatic amino acid biosynthesis. This reaction introduces a second double bond into the aromatic ring system. This is Chorismate synthase from Edwardsiella ictaluri (strain 93-146).